Reading from the N-terminus, the 415-residue chain is MVATAASSAFFPLPSADTSSRPGKLGNKPSSLSPLKPKSTPNGGLQVKANASAPPKINGSPVGLKSGGLKTQEDAHSAPPPRTFINQLPDWSMLLAAITTVFLAAEKQWMMLDWKPKRPDMLVDPFGLGSIVQDGLVFRQNFSIRSYEIGADRTASIETVMNHLQETALNHVKIAGLSNDGFGRTPEMYKRDLIWVVAKMQVMVNRYPTWGDTVEVNTWVAKSGKNGMRRDWLISDCNTGEILTRASSVWVMMNQKTRRLSKIPDEVRNEIEPHFVDSPPVIEDDDRKLPKLDEKTADSIRKGLTPRWNDLDVNQHVNNVKYIGWILESTPPEVLETQELCSLTLEYRRECGRESVLESLTAMDPSGGGYGSQFQHLLRLEDGGEIVKGRTEWRPKNGVINGVVPTGESSPGDYS.

Low complexity-rich tracts occupy residues 1-16 and 24-41; these read MVATAASSAFFPLPSA and KLGNKPSSLSPLKPKSTP. The transit peptide at 1-60 directs the protein to the chloroplast; sequence MVATAASSAFFPLPSADTSSRPGKLGNKPSSLSPLKPKSTPNGGLQVKANASAPPKINGS. Residues 1 to 81 are disordered; it reads MVATAASSAF…QEDAHSAPPP (81 aa). Residues N314, H316, and C351 contribute to the active site.

This sequence belongs to the acyl-ACP thioesterase family.

The protein localises to the plastid. It localises to the chloroplast. It catalyses the reaction hexadecanoyl-[ACP] + H2O = hexadecanoate + holo-[ACP] + H(+). In terms of biological role, plays an essential role in chain termination during de novo fatty acid synthesis. High thioesterase activity for palmitoyl-ACP versus other acyl-ACPs. The sequence is that of Palmitoyl-acyl carrier protein thioesterase, chloroplastic (FATB1) from Cuphea hookeriana (Cigar plant).